A 266-amino-acid polypeptide reads, in one-letter code: Heat-inducible transcription repressor HrcA (266 aa).

The protein belongs to the HrcA family.

Negative regulator of class I heat shock genes (grpE-dnaK-dnaJ and groELS operons). Prevents heat-shock induction of these operons. This chain is Heat-inducible transcription repressor HrcA, found in Helicobacter pylori (strain J99 / ATCC 700824) (Campylobacter pylori J99).